A 598-amino-acid chain; its full sequence is Phenylalanine--tRNA ligase beta subunit, cytoplasmic (598 aa).

In terms of domain architecture, B5 spans Leu-303–Thr-383. Mg(2+)-binding residues include Asp-361, Asp-367, Glu-370, and Asp-371.

Belongs to the phenylalanyl-tRNA synthetase beta subunit family. Type 2 subfamily. As to quaternary structure, tetramer of two alpha and two beta subunits. Requires Mg(2+) as cofactor.

Its subcellular location is the cytoplasm. The protein localises to the cytosol. It carries out the reaction tRNA(Phe) + L-phenylalanine + ATP = L-phenylalanyl-tRNA(Phe) + AMP + diphosphate + H(+). This chain is Phenylalanine--tRNA ligase beta subunit, cytoplasmic, found in Arabidopsis thaliana (Mouse-ear cress).